The sequence spans 183 residues: Endoribonuclease YbeY (183 aa).

Residues histidine 143, histidine 147, and histidine 153 each contribute to the Zn(2+) site.

It belongs to the endoribonuclease YbeY family. The cofactor is Zn(2+).

Its subcellular location is the cytoplasm. Its function is as follows. Single strand-specific metallo-endoribonuclease involved in late-stage 70S ribosome quality control and in maturation of the 3' terminus of the 16S rRNA. In Rickettsia bellii (strain OSU 85-389), this protein is Endoribonuclease YbeY.